We begin with the raw amino-acid sequence, 471 residues long: tRNA(Ile)-lysidine synthase (471 aa).

35-40 contacts ATP; the sequence is SGGADS.

This sequence belongs to the tRNA(Ile)-lysidine synthase family.

Its subcellular location is the cytoplasm. The catalysed reaction is cytidine(34) in tRNA(Ile2) + L-lysine + ATP = lysidine(34) in tRNA(Ile2) + AMP + diphosphate + H(+). Its function is as follows. Ligates lysine onto the cytidine present at position 34 of the AUA codon-specific tRNA(Ile) that contains the anticodon CAU, in an ATP-dependent manner. Cytidine is converted to lysidine, thus changing the amino acid specificity of the tRNA from methionine to isoleucine. The chain is tRNA(Ile)-lysidine synthase from Geobacter sulfurreducens (strain ATCC 51573 / DSM 12127 / PCA).